The sequence spans 291 residues: Pentonolactonase XacC (291 aa).

Residues glutamate 15, asparagine 141, and aspartate 191 each contribute to the a divalent metal cation site. The active-site Proton donor/acceptor is aspartate 191.

This sequence belongs to the SMP-30/CGR1 family. As to quaternary structure, monomer. The cofactor is a divalent metal cation.

It carries out the reaction L-arabinono-1,4-lactone + H2O = L-arabinonate + H(+). The catalysed reaction is D-xylono-1,4-lactone + H2O = D-xylonate + H(+). It participates in carbohydrate degradation. Pentonolactonase involved in D-arabinose and D-xylose catabolism. Catalyzes the hydrolysis of both L-arabino-gamma-lactone and D-xylono-gamma-lactone to the corresponding acids. Can also hydrolyze D-galactono-gamma-lactone and D-glucono-delta-lactone. The sequence is that of Pentonolactonase XacC from Haloferax volcanii (strain ATCC 29605 / DSM 3757 / JCM 8879 / NBRC 14742 / NCIMB 2012 / VKM B-1768 / DS2) (Halobacterium volcanii).